The chain runs to 531 residues: SWI/SNF-related matrix-associated actin-dependent regulator of chromatin subfamily D member 2 (531 aa).

An asymmetric dimethylarginine mark is found at Arg-81 and Arg-104. Ser-203 carries the phosphoserine modification. Residues 205–226 are disordered; sequence SKAEGDSAGTAGTPGGTPAGDK. Thr-217 is subject to Phosphothreonine. Lys-226 is covalently cross-linked (Glycyl lysine isopeptide (Lys-Gly) (interchain with G-Cter in SUMO2)). Residues 306–383 enclose the SWIB/MDM2 domain; sequence HQPPQYKLDP…PMKLAGLLQH (78 aa).

Belongs to the SMARCD family. As to quaternary structure, component of the multiprotein chromatin-remodeling complexes SWI/SNF: SWI/SNF-A (BAF), SWI/SNF-B (PBAF) and related complexes. The canonical complex contains a catalytic subunit (either SMARCA4/BRG1/BAF190A or SMARCA2/BRM/BAF190B), and at least SMARCE1, ACTL6A/BAF53, SMARCC1/BAF155, SMARCC2/BAF170, and SMARCB1/SNF5/BAF47. Other subunits specific to each of the complexes may also be present permitting several possible combinations developmentally and tissue specific. Component of the BAF complex, which includes at least actin (ACTB), ARID1A/BAF250A, ARID1B/BAF250B, SMARCA2/BRM, SMARCA4/BRG1, ACTL6A/BAF53, ACTL6B/BAF53B, SMARCE1/BAF57, SMARCC1/BAF155, SMARCC2/BAF170, SMARCB1/SNF5/INI1, and one or more SMARCD1/BAF60A, SMARCD2/BAF60B, or SMARCD3/BAF60C. In muscle cells, the BAF complex also contains DPF3. Component of the SWI/SNF-B (PBAF) chromatin remodeling complex, at least composed of SMARCA4/BRG1, SMARCB1/BAF47/SNF5, ACTL6A/BAF53A or ACTL6B/BAF53B, SMARCE1/BAF57, SMARCD1/BAF60A, SMARCD2/BAF60B, perhaps SMARCD3/BAF60C, SMARCC1/BAF155, SMARCC2/BAF170, PBRM1/BAF180, ARID2/BAF200 and actin (ACTB). Interacts with UNKL. Interacts with CEBPE. Post-translationally, ubiquitinated through a signaling process involving RAC1 and the RING finger protein UNKL. Isoform 2 is expressed in the pancreas.

The protein localises to the nucleus. In terms of biological role, involved in transcriptional activation and repression of select genes by chromatin remodeling (alteration of DNA-nucleosome topology). Component of SWI/SNF chromatin remodeling complexes that carry out key enzymatic activities, changing chromatin structure by altering DNA-histone contacts within a nucleosome in an ATP-dependent manner. Critical regulator of myeloid differentiation, controlling granulocytopoiesis and the expression of genes involved in neutrophil granule formation. This is SWI/SNF-related matrix-associated actin-dependent regulator of chromatin subfamily D member 2 (SMARCD2) from Homo sapiens (Human).